A 710-amino-acid polypeptide reads, in one-letter code: DNA ligase (710 aa).

NAD(+)-binding positions include 53 to 57, 102 to 103, and E136; these read DAEYD and SL. Residue K138 is the N6-AMP-lysine intermediate of the active site. NAD(+) contacts are provided by R159, E196, K312, and K336. Residues C429, C432, C453, and C459 each contribute to the Zn(2+) site. The BRCT domain maps to 633–710; it reads ETSSPVAGKT…DEDQWIELAG (78 aa).

The protein belongs to the NAD-dependent DNA ligase family. LigA subfamily. The cofactor is Mg(2+). Requires Mn(2+) as cofactor.

It carries out the reaction NAD(+) + (deoxyribonucleotide)n-3'-hydroxyl + 5'-phospho-(deoxyribonucleotide)m = (deoxyribonucleotide)n+m + AMP + beta-nicotinamide D-nucleotide.. In terms of biological role, DNA ligase that catalyzes the formation of phosphodiester linkages between 5'-phosphoryl and 3'-hydroxyl groups in double-stranded DNA using NAD as a coenzyme and as the energy source for the reaction. It is essential for DNA replication and repair of damaged DNA. The chain is DNA ligase from Parvibaculum lavamentivorans (strain DS-1 / DSM 13023 / NCIMB 13966).